The chain runs to 246 residues: NH(3)-dependent NAD(+) synthetase (246 aa).

29-36 (GLSGGIDS) is an ATP binding site. Position 35 (aspartate 35) interacts with Mg(2+). Arginine 110 lines the deamido-NAD(+) pocket. Position 130 (threonine 130) interacts with ATP. Residue glutamate 135 participates in Mg(2+) binding. Residues lysine 159 and serine 181 each coordinate ATP.

Belongs to the NAD synthetase family. As to quaternary structure, homodimer.

The catalysed reaction is deamido-NAD(+) + NH4(+) + ATP = AMP + diphosphate + NAD(+) + H(+). It participates in cofactor biosynthesis; NAD(+) biosynthesis; NAD(+) from deamido-NAD(+) (ammonia route): step 1/1. Functionally, catalyzes the ATP-dependent amidation of deamido-NAD to form NAD. Uses ammonia as a nitrogen source. This is NH(3)-dependent NAD(+) synthetase from Campylobacter jejuni subsp. doylei (strain ATCC BAA-1458 / RM4099 / 269.97).